We begin with the raw amino-acid sequence, 160 residues long: Cytochrome b6-f complex subunit 4 (160 aa).

3 helical membrane-spanning segments follow: residues Leu-36–Val-56, Leu-95–Glu-115, and Thr-131–Ile-151.

The protein belongs to the cytochrome b family. PetD subfamily. The 4 large subunits of the cytochrome b6-f complex are cytochrome b6, subunit IV (17 kDa polypeptide, petD), cytochrome f and the Rieske protein, while the 4 small subunits are petG, petL, petM and petN. The complex functions as a dimer.

Its subcellular location is the plastid. It localises to the chloroplast thylakoid membrane. Component of the cytochrome b6-f complex, which mediates electron transfer between photosystem II (PSII) and photosystem I (PSI), cyclic electron flow around PSI, and state transitions. The polypeptide is Cytochrome b6-f complex subunit 4 (Spirogyra maxima (Green alga)).